The primary structure comprises 319 residues: Aspartate carbamoyltransferase catalytic subunit (319 aa).

Carbamoyl phosphate contacts are provided by Arg57 and Thr58. Lys85 is an L-aspartate binding site. Arg107, His135, and Gln138 together coordinate carbamoyl phosphate. L-aspartate-binding residues include Arg168 and Arg222. Gly263 and Pro264 together coordinate carbamoyl phosphate.

This sequence belongs to the aspartate/ornithine carbamoyltransferase superfamily. ATCase family. As to quaternary structure, heterododecamer (2C3:3R2) of six catalytic PyrB chains organized as two trimers (C3), and six regulatory PyrI chains organized as three dimers (R2).

It catalyses the reaction carbamoyl phosphate + L-aspartate = N-carbamoyl-L-aspartate + phosphate + H(+). It participates in pyrimidine metabolism; UMP biosynthesis via de novo pathway; (S)-dihydroorotate from bicarbonate: step 2/3. Its function is as follows. Catalyzes the condensation of carbamoyl phosphate and aspartate to form carbamoyl aspartate and inorganic phosphate, the committed step in the de novo pyrimidine nucleotide biosynthesis pathway. The chain is Aspartate carbamoyltransferase catalytic subunit from Paracoccus denitrificans (strain Pd 1222).